The following is a 124-amino-acid chain: Small ribosomal subunit protein bS6 (124 aa).

A disordered region spans residues 96 to 124 (ETAPSPMMKEVQREEARKAAQTTTEGQPA). Over residues 115-124 (AQTTTEGQPA) the composition is skewed to polar residues.

Belongs to the bacterial ribosomal protein bS6 family.

Functionally, binds together with bS18 to 16S ribosomal RNA. This Cupriavidus metallidurans (strain ATCC 43123 / DSM 2839 / NBRC 102507 / CH34) (Ralstonia metallidurans) protein is Small ribosomal subunit protein bS6.